Here is a 326-residue protein sequence, read N- to C-terminus: UDP-N-acetylglucosamine transporter (326 aa).

8 helical membrane-spanning segments follow: residues 4–24, 38–58, 136–156, 174–194, 212–232, 244–264, 269–289, and 293–313; these read NLKY…VLTM, LSST…ILLV, LGVY…FVQW, FVGL…GVYF, LGFF…GELV, LTWI…AVIK, ILKG…SYFW, and FVPT…TFLY.

Belongs to the nucleotide-sugar transporter family. SLC35A subfamily. As to quaternary structure, interacts with SLC35A2; the interaction is reduced in the presence of SLC35A4. Found in a complex with SLC35A2 and SLC35A4. Interacts with MGAT4B. O-Glcnacylation regulates the stability of SLC35A3 and the specific complex formation with MGAT4B.

The protein resides in the golgi apparatus membrane. The enzyme catalyses UMP(out) + UDP-N-acetyl-alpha-D-glucosamine(in) = UMP(in) + UDP-N-acetyl-alpha-D-glucosamine(out). In terms of biological role, transports diphosphate-N-acetylglucosamine (UDP-GlcNAc) from the cytosol into the lumen of the Golgi apparatus, functioning as an antiporter that exchanges UDP-N-acetyl-alpha-D-glucosamine for UMP. May supply UDP-GlcNAc as substrate for Golgi-resident glycosyltransferases that generate highly branched, multiantennary complex N-glycans and keratan sulfate. However, the exact role of SLC35A3 still needs to be elucidated, it could be a member of a catalytically more efficient multiprotein complex rather than function independently as a single transporter. This chain is UDP-N-acetylglucosamine transporter (SLC35A3), found in Bos taurus (Bovine).